The primary structure comprises 549 residues: MERKEIKDSAYLFLGSIGPAFENITLGIGDKLALKAIAGAYRVSEEEVKKRYSRTGDLGDVAFELNQGEEKSLAIDEVFGSLKEIKEASGKGSQEEKTGLLSSILQRASPKEGKYIVRIVLGKLRLGFGDQFLLEAFSIAFTGDKKYVVKIKESYSVCTDIGELAESLAEQGPKALGHFSIKLGRPVRSMLAQRVKTFEELEERIPGKKAAEEKYDGERVQIHKNGEEIKAFSRRLEDITAQYPDVIEAVRKGILAKKIVLDGEIIAYVEGGKANDSTGEFYSFQRLMKRRRKYEVQKYTEICPVAVFFFDILYLEGNSLLKKPYPERRAILEEHVKESEILHLARRIVTDNLEEIEDFFNEALEKRLEGIIIKSMGRNSAYEAGKRSWFWLKWKEEYASGMRETFDLAIIGKYYGRGKRKGSFGALLCAILNGEEQRFETFTKVGTGFTEADAKEIDSLLSEHIISEVPKNVLIKSRMLPDIFVEPSLVIEVLGSEITESPSHTAGQGEGDTGLALRFPRFLRIRHDKGPYDITTLTEVRNLKEGKSI.

Glu212 contacts ATP. Lys214 acts as the N6-AMP-lysine intermediate in catalysis. ATP-binding residues include Arg219, Arg234, Glu264, Phe310, Arg387, and Lys393.

The protein belongs to the ATP-dependent DNA ligase family. Mg(2+) is required as a cofactor.

The enzyme catalyses ATP + (deoxyribonucleotide)n-3'-hydroxyl + 5'-phospho-(deoxyribonucleotide)m = (deoxyribonucleotide)n+m + AMP + diphosphate.. In terms of biological role, DNA ligase that seals nicks in double-stranded DNA during DNA replication, DNA recombination and DNA repair. This chain is DNA ligase 1, found in Methanosarcina barkeri (strain Fusaro / DSM 804).